We begin with the raw amino-acid sequence, 211 residues long: Dof zinc finger protein 5 (211 aa).

The disordered stretch occupies residues 37–101; that stretch reads FVVAREKVEP…QRRLQDSAEA (65 aa). The segment covering 68 to 80 has biased composition (basic and acidic residues); the sequence is IKREAADRDEEQR. The Dof-type zinc-finger motif lies at 109–163; the sequence is LPCPRCRSRDTKFCYFNNYNVNQPRHFCKACHRYWTAGGALRNVPVGAGRRKNRP. Zn(2+) is bound by residues cysteine 111, cysteine 114, cysteine 136, and cysteine 139. Positions 191 to 211 are disordered; it reads SPTSPSPVYTDRWPVTPDRPF.

Its subcellular location is the nucleus. Its function is as follows. Transcription factor that may transactivate seed storage protein genes in developing seeds. In Oryza sativa subsp. japonica (Rice), this protein is Dof zinc finger protein 5.